The chain runs to 102 residues: Small ribosomal subunit protein uS10 (102 aa).

Belongs to the universal ribosomal protein uS10 family. Part of the 30S ribosomal subunit.

In terms of biological role, involved in the binding of tRNA to the ribosomes. The protein is Small ribosomal subunit protein uS10 of Lacticaseibacillus casei (strain BL23) (Lactobacillus casei).